A 356-amino-acid polypeptide reads, in one-letter code: UDP-3-O-acylglucosamine N-acyltransferase (356 aa).

The active-site Proton acceptor is the H242.

The protein belongs to the transferase hexapeptide repeat family. LpxD subfamily. Homotrimer.

The catalysed reaction is a UDP-3-O-[(3R)-3-hydroxyacyl]-alpha-D-glucosamine + a (3R)-hydroxyacyl-[ACP] = a UDP-2-N,3-O-bis[(3R)-3-hydroxyacyl]-alpha-D-glucosamine + holo-[ACP] + H(+). It participates in bacterial outer membrane biogenesis; LPS lipid A biosynthesis. Its function is as follows. Catalyzes the N-acylation of UDP-3-O-acylglucosamine using 3-hydroxyacyl-ACP as the acyl donor. Is involved in the biosynthesis of lipid A, a phosphorylated glycolipid that anchors the lipopolysaccharide to the outer membrane of the cell. The chain is UDP-3-O-acylglucosamine N-acyltransferase from Acinetobacter baumannii (strain AB307-0294).